The sequence spans 346 residues: Holliday junction branch migration complex subunit RuvB (346 aa).

The interval 1–183 (MTEQRIIASS…FGIVQRLEFY (183 aa)) is large ATPase domain (RuvB-L). ATP is bound by residues isoleucine 22, arginine 23, glycine 64, lysine 67, threonine 68, threonine 69, 130 to 132 (EDF), arginine 173, tyrosine 183, and arginine 220. Threonine 68 lines the Mg(2+) pocket. The segment at 184 to 254 (SPQELTRIVS…VAQAAMQMLK (71 aa)) is small ATPAse domain (RuvB-S). Positions 257 to 346 (PEGFDELDRR…PGIGEPGDLF (90 aa)) are head domain (RuvB-H). DNA is bound by residues arginine 293, arginine 312, and arginine 317.

Belongs to the RuvB family. Homohexamer. Forms an RuvA(8)-RuvB(12)-Holliday junction (HJ) complex. HJ DNA is sandwiched between 2 RuvA tetramers; dsDNA enters through RuvA and exits via RuvB. An RuvB hexamer assembles on each DNA strand where it exits the tetramer. Each RuvB hexamer is contacted by two RuvA subunits (via domain III) on 2 adjacent RuvB subunits; this complex drives branch migration. In the full resolvosome a probable DNA-RuvA(4)-RuvB(12)-RuvC(2) complex forms which resolves the HJ.

The protein localises to the cytoplasm. It carries out the reaction ATP + H2O = ADP + phosphate + H(+). The RuvA-RuvB-RuvC complex processes Holliday junction (HJ) DNA during genetic recombination and DNA repair, while the RuvA-RuvB complex plays an important role in the rescue of blocked DNA replication forks via replication fork reversal (RFR). RuvA specifically binds to HJ cruciform DNA, conferring on it an open structure. The RuvB hexamer acts as an ATP-dependent pump, pulling dsDNA into and through the RuvAB complex. RuvB forms 2 homohexamers on either side of HJ DNA bound by 1 or 2 RuvA tetramers; 4 subunits per hexamer contact DNA at a time. Coordinated motions by a converter formed by DNA-disengaged RuvB subunits stimulates ATP hydrolysis and nucleotide exchange. Immobilization of the converter enables RuvB to convert the ATP-contained energy into a lever motion, pulling 2 nucleotides of DNA out of the RuvA tetramer per ATP hydrolyzed, thus driving DNA branch migration. The RuvB motors rotate together with the DNA substrate, which together with the progressing nucleotide cycle form the mechanistic basis for DNA recombination by continuous HJ branch migration. Branch migration allows RuvC to scan DNA until it finds its consensus sequence, where it cleaves and resolves cruciform DNA. The protein is Holliday junction branch migration complex subunit RuvB of Xanthomonas euvesicatoria pv. vesicatoria (strain 85-10) (Xanthomonas campestris pv. vesicatoria).